Consider the following 367-residue polypeptide: MTYTGSIRCEGDTWDLASSVGATATMVAAARAMATRAANPLINDQFAEPLVRAVGVDVLTRLASGELTASDIDDPERPNASMVRMAEHHAVRTKFFDEFFMDATRAGIRQVVILASGLDSRAYRLAWPAQTVVYEIDQPQVMEFKTRTLAELGATPTADRRVVTADLRADWPTALGAAGFDPTQPTAWSAEGLLRYLPPEAQDRLLDNVTALSVPDSRFATESIRNFKPHHEERMRERMTILANRWRAYGFDLDMNELVYFGDRNEPASYLSDNGWLLTEIKSQDLLTANGFQPFEDEEVPLPDFFYVSARLQRKHRQYPAHRKPAPSWRHTACPVNELSKSAAYTMTRSDAHQASTTAPPPPGLTG.

S-adenosyl-L-methionine contacts are provided by residues Asp137 and 166–167; that span reads DL. Positions 348 to 358 are enriched in polar residues; it reads TRSDAHQASTT. Residues 348 to 367 form a disordered region; that stretch reads TRSDAHQASTTAPPPPGLTG.

This sequence belongs to the UPF0677 family.

In terms of biological role, exhibits S-adenosyl-L-methionine-dependent methyltransferase activity. The sequence is that of Putative S-adenosyl-L-methionine-dependent methyltransferase MT0751 from Mycobacterium tuberculosis (strain CDC 1551 / Oshkosh).